A 505-amino-acid polypeptide reads, in one-letter code: Sensor protein FixL (505 aa).

The region spanning 14 to 85 is the PAS 1 domain; the sequence is RGEHFRVRIE…SAIKRVSERG (72 aa). The PAC 1 domain occupies 88–140; sequence FDVSFRVAGTSNAGQWIRARAGLIRDEAGTARHLSGIFLDIDEEKQVEGALRT. One can recognise a PAS 2 domain in the interval 141-208; it reads RETHLRSILH…RHDSYISRYR (68 aa). H200 contributes to the heme binding site. Residues 209–268 enclose the PAC 2 domain; that stretch reads TTSDPHIIGIGRIVTGKRRDGTTFPMHLSIGEMQSGGEPYFTGFVRDLTEHQQTQARLQE. In terms of domain architecture, Histidine kinase spans 288–503; it reads ALAHELNQPL…TFRFTLPAAD (216 aa). Phosphohistidine; by autocatalysis is present on H291.

Heme is required as a cofactor.

The enzyme catalyses ATP + protein L-histidine = ADP + protein N-phospho-L-histidine.. With respect to regulation, the heme moiety regulates the kinase activity. Its function is as follows. Putative oxygen sensor; modulates the activity of FixJ, a transcriptional activator of nitrogen fixation fixK gene. FixL probably acts as a kinase that phosphorylates FixJ. The chain is Sensor protein FixL (fixL) from Bradyrhizobium diazoefficiens (strain JCM 10833 / BCRC 13528 / IAM 13628 / NBRC 14792 / USDA 110).